The primary structure comprises 365 residues: UDP-N-acetylglucosamine--N-acetylmuramyl-(pentapeptide) pyrophosphoryl-undecaprenol N-acetylglucosamine transferase (365 aa).

UDP-N-acetyl-alpha-D-glucosamine-binding positions include 17–19, Asn129, Arg167, Ser194, Ile250, 269–274, and Gln295; these read TGG and ALTVSE.

Belongs to the glycosyltransferase 28 family. MurG subfamily.

The protein resides in the cell inner membrane. It catalyses the reaction di-trans,octa-cis-undecaprenyl diphospho-N-acetyl-alpha-D-muramoyl-L-alanyl-D-glutamyl-meso-2,6-diaminopimeloyl-D-alanyl-D-alanine + UDP-N-acetyl-alpha-D-glucosamine = di-trans,octa-cis-undecaprenyl diphospho-[N-acetyl-alpha-D-glucosaminyl-(1-&gt;4)]-N-acetyl-alpha-D-muramoyl-L-alanyl-D-glutamyl-meso-2,6-diaminopimeloyl-D-alanyl-D-alanine + UDP + H(+). It functions in the pathway cell wall biogenesis; peptidoglycan biosynthesis. Its function is as follows. Cell wall formation. Catalyzes the transfer of a GlcNAc subunit on undecaprenyl-pyrophosphoryl-MurNAc-pentapeptide (lipid intermediate I) to form undecaprenyl-pyrophosphoryl-MurNAc-(pentapeptide)GlcNAc (lipid intermediate II). The polypeptide is UDP-N-acetylglucosamine--N-acetylmuramyl-(pentapeptide) pyrophosphoryl-undecaprenol N-acetylglucosamine transferase (Shewanella pealeana (strain ATCC 700345 / ANG-SQ1)).